The chain runs to 229 residues: Glutathione S-transferase 1 (229 aa).

Residues 2 to 83 (SPVKVFGHPM…YILRKYGGTA (82 aa)) form the GST N-terminal domain. Glutathione is bound by residues 41 to 42 (HK), 54 to 55 (KM), and 67 to 68 (ES). In terms of domain architecture, GST C-terminal spans 93-223 (GIEELAMVDV…RVCKHMPTEF (131 aa)).

The protein belongs to the GST superfamily. Phi family.

It carries out the reaction RX + glutathione = an S-substituted glutathione + a halide anion + H(+). Conjugation of reduced glutathione to a wide number of exogenous and endogenous hydrophobic electrophiles. This chain is Glutathione S-transferase 1 (GSTA1), found in Triticum aestivum (Wheat).